We begin with the raw amino-acid sequence, 275 residues long: Hydroxyethylthiazole kinase (275 aa).

Met50 lines the substrate pocket. ATP-binding residues include Arg126 and Ser171. A substrate-binding site is contributed by Ala200.

This sequence belongs to the Thz kinase family. Mg(2+) serves as cofactor.

The enzyme catalyses 5-(2-hydroxyethyl)-4-methylthiazole + ATP = 4-methyl-5-(2-phosphooxyethyl)-thiazole + ADP + H(+). It participates in cofactor biosynthesis; thiamine diphosphate biosynthesis; 4-methyl-5-(2-phosphoethyl)-thiazole from 5-(2-hydroxyethyl)-4-methylthiazole: step 1/1. Functionally, catalyzes the phosphorylation of the hydroxyl group of 4-methyl-5-beta-hydroxyethylthiazole (THZ). The chain is Hydroxyethylthiazole kinase from Acinetobacter baumannii (strain SDF).